The chain runs to 128 residues: Cionin (128 aa).

The first 22 residues, 1–22 (MGSNIVIYFSIIVIVTLNVNGV), serve as a signal peptide directing secretion. The propeptide occupies 23-108 (PASDLFKSVS…NQGHMQRMDR (86 aa)). 2 positions are modified to sulfotyrosine: Tyr-110 and Tyr-111. Phe-116 is modified (phenylalanine amide). A propeptide spanning residues 120–128 (AIEDVDYEY) is cleaved from the precursor.

The protein belongs to the gastrin/cholecystokinin family. Expressed in both the gut and the neural ganglion.

Its subcellular location is the secreted. The sequence is that of Cionin from Ciona intestinalis (Transparent sea squirt).